Reading from the N-terminus, the 64-residue chain is uncharacterized protein (64 aa).

It is found in the mitochondrion. This is an uncharacterized protein from Marchantia polymorpha (Common liverwort).